Consider the following 416-residue polypeptide: Formyl-CoA:oxalate CoA-transferase (416 aa).

CoA is bound by residues 17-18, arginine 38, 72-75, 96-98, histidine 104, and 137-140; these read QS, LNTK, NFH, and KAYE. The active-site Nucleophile is aspartate 169. 248–250 serves as a coordination point for substrate; the sequence is GGQ. 273–275 contributes to the CoA binding site; it reads QEQ.

The protein belongs to the CoA-transferase III family. Frc subfamily. As to quaternary structure, homodimer.

The enzyme catalyses formyl-CoA + oxalate = oxalyl-CoA + formate. It functions in the pathway metabolic intermediate degradation; oxalate degradation; CO(2) and formate from oxalate: step 1/2. Involved in the catabolism of oxalate and in the adapatation to low pH via the induction of the oxalate-dependent acid tolerance response (ATR). Catalyzes the transfer of the CoA moiety from formyl-CoA to oxalate. This is Formyl-CoA:oxalate CoA-transferase from Shigella sonnei (strain Ss046).